The sequence spans 110 residues: Phosphoribosyl-ATP pyrophosphatase (110 aa).

It belongs to the PRA-PH family.

It localises to the cytoplasm. It carries out the reaction 1-(5-phospho-beta-D-ribosyl)-ATP + H2O = 1-(5-phospho-beta-D-ribosyl)-5'-AMP + diphosphate + H(+). It participates in amino-acid biosynthesis; L-histidine biosynthesis; L-histidine from 5-phospho-alpha-D-ribose 1-diphosphate: step 2/9. This chain is Phosphoribosyl-ATP pyrophosphatase, found in Pseudomonas syringae pv. tomato (strain ATCC BAA-871 / DC3000).